A 98-amino-acid chain; its full sequence is NADH-ubiquinone oxidoreductase chain 4L (98 aa).

The next 3 helical transmembrane spans lie at 1-21 (MTHI…GLTF), 26-46 (LLSA…ALAM), and 59-79 (APLL…SLLV).

This sequence belongs to the complex I subunit 4L family.

It localises to the mitochondrion membrane. It carries out the reaction a ubiquinone + NADH + 5 H(+)(in) = a ubiquinol + NAD(+) + 4 H(+)(out). Its function is as follows. Core subunit of the mitochondrial membrane respiratory chain NADH dehydrogenase (Complex I) which catalyzes electron transfer from NADH through the respiratory chain, using ubiquinone as an electron acceptor. Part of the enzyme membrane arm which is embedded in the lipid bilayer and involved in proton translocation. This is NADH-ubiquinone oxidoreductase chain 4L (MT-ND4L) from Polypterus ornatipinnis (Ornate bichir).